A 969-amino-acid chain; its full sequence is Rab3 GTPase-activating protein catalytic subunit (969 aa).

Positions 532–549 (DDGKKSSSSDGARDRSRG) are enriched in basic and acidic residues. The tract at residues 532-613 (DDGKKSSSSD…PEGRLQPHGT (82 aa)) is disordered. Residues 550 to 572 (APEGAGPEGAGPAEAAGKSWDSW) are compositionally biased toward low complexity. Residues 573-589 (SDSEDEFFECVSDTEEM) show a composition bias toward acidic residues. Residues 590–608 (KEDKEEAENRSRSKPEGRL) show a composition bias toward basic and acidic residues.

The protein belongs to the Rab3-GAP catalytic subunit family. In terms of assembly, the Rab3 GTPase-activating complex is a heterodimer composed of rab3gap1 and rab3gap2. The Rab3 GTPase-activating complex interacts with DMXL2. Interacts with LMAN1.

It is found in the cytoplasm. Its subcellular location is the endoplasmic reticulum. The protein localises to the golgi apparatus. It localises to the cis-Golgi network. Its function is as follows. Catalytic subunit of the Rab3 GTPase-activating (Rab3GAP) complex composed of rab3gap1 and rab3gap2, which has GTPase-activating protein (GAP) activity towards various Rab3 subfamily members (RAB3A, RAB3B, RAB3C and RAB3D), RAB5A and RAB43, and guanine nucleotide exchange factor (GEF) activity towards RAB18. As part of the Rab3GAP complex, acts as a GAP for Rab3 proteins by converting active RAB3-GTP to the inactive form RAB3-GDP. Rab3 proteins are involved in regulated exocytosis of neurotransmitters and hormones. The Rab3GAP complex, acts as a GEF for RAB18 by promoting the conversion of inactive RAB18-GDP to the active form RAB18-GTP. Recruits and stabilizes RAB18 at the cis-Golgi membrane where RAB18 is most likely activated. Also involved in RAB18 recruitment at the endoplasmic reticulum (ER) membrane where it maintains proper ER structure. Required for normal eye and brain development. May participate in neurodevelopmental processes such as proliferation, migration and differentiation before synapse formation, and non-synaptic vesicular release of neurotransmitters. This chain is Rab3 GTPase-activating protein catalytic subunit (rab3gap1), found in Danio rerio (Zebrafish).